An 837-amino-acid chain; its full sequence is Dapper homolog 2 (837 aa).

The stretch at 65–113 (ENVSKEELRLEATLSLLKQQLTRLRRQDVGLKTHLQQLDQQITELKLDV) forms a coiled coil. Disordered stretches follow at residues 189–265 (ADES…PKYQ), 424–497 (HGKH…DKSS), 512–564 (GSQR…KQSG), 600–649 (QQIP…HTQR), and 738–782 (EMSD…EDEG). 2 stretches are compositionally biased toward polar residues: residues 246–265 (VKSSTPCSSPQNPSVDPKYQ) and 432–445 (LDLQKNNFPINNTA). Composition is skewed to basic and acidic residues over residues 456 to 466 (ASEKRSGHFPK), 486 to 496 (EGSRASCHDKS), and 548 to 560 (LSREFCTKNRTDL). Polar residues predominate over residues 741 to 759 (DYTTNRFGDSESSQGSQTA). Residues 768-782 (LDEEDLLEEEEEDEG) are compositionally biased toward acidic residues. Residues 834-837 (MTLV) carry the PDZ-binding motif.

This sequence belongs to the dapper family. Interacts with dvl2.

It is found in the cytoplasm. The protein localises to the late endosome. It localises to the nucleus. Its subcellular location is the cell membrane. Functionally, involved in regulation of intracellular signaling pathways during development. Specifically thought to play a role in canonical and/or non-canonical Wnt signaling pathways through interaction with DSH (Dishevelled) family proteins. Positive regulator of the Wnt signaling pathway which acts downstream of wnt1 indicative for non-canonical Wnt signaling. Also negatively regulates the Nodal signaling pathway, possibly by promoting the lysosomal degradation of Nodal receptors. Required for convergent extension movements in gastrulation. The protein is Dapper homolog 2 (dact2) of Danio rerio (Zebrafish).